The chain runs to 429 residues: Serine carboxypeptidase-like (429 aa).

3 disulfides stabilise this stretch: cysteine 58-cysteine 298, cysteine 226-cysteine 241, and cysteine 264-cysteine 269. N-linked (GlcNAc...) asparagine glycosylation occurs at asparagine 76. Serine 148 is a catalytic residue. The active site involves aspartate 336. Substrate is bound at residue cysteine 339. Histidine 393 is an active-site residue. Residues asparagine 414 and asparagine 417 are each glycosylated (N-linked (GlcNAc...) asparagine).

The protein belongs to the peptidase S10 family. In terms of tissue distribution, abundant in germinated embryos composed of leaf, root, and scutellum.

In Oryza sativa subsp. japonica (Rice), this protein is Serine carboxypeptidase-like (CBP31).